The chain runs to 32 residues: Ranatuerin-3 (32 aa).

Residues Cys-23 and Cys-28 are joined by a disulfide bond.

It belongs to the frog skin active peptide (FSAP) family. Ranatuerin subfamily. In terms of tissue distribution, expressed by the skin glands.

It localises to the secreted. Functionally, antibacterial activity against Gram-positive bacterium S.aureus (MIC=60 uM). Shows no detectable hemolytic activity towards human erythrocytes. The sequence is that of Ranatuerin-3 from Aquarana catesbeiana (American bullfrog).